The chain runs to 126 residues: UPF0102 protein Mlg_2205 (126 aa).

The protein belongs to the UPF0102 family.

This chain is UPF0102 protein Mlg_2205, found in Alkalilimnicola ehrlichii (strain ATCC BAA-1101 / DSM 17681 / MLHE-1).